The primary structure comprises 771 residues: Polymeric immunoglobulin receptor (771 aa).

An N-terminal signal peptide occupies residues 1 to 18 (MRLYLFTLLVTVFSGVST). The Extracellular segment spans residues 19-645 (KSPIFGPQEV…DGQSRSSSSK (627 aa)). Residues 21–120 (PIFGPQEVSS…GLGTSNRGLS (100 aa)) enclose the Ig-like V-type 1; required for binding to polymeric IgA and IgM domain. A disulfide bridge connects residues cysteine 40 and cysteine 110. Residues asparagine 90, asparagine 147, asparagine 170, and asparagine 206 are each glycosylated (N-linked (GlcNAc...) asparagine). 4 Ig-like V-type domains span residues 135-237 (SDTH…DLQV), 245-351 (LYKD…ESTI), 352-457 (PNRR…LQVA), and 463-563 (PNLE…IYIA). 3 disulfide bridges follow: cysteine 152–cysteine 220, cysteine 257–cysteine 324, and cysteine 370–cysteine 440. N-linked (GlcNAc...) asparagine glycosylation is found at asparagine 420 and asparagine 471. A disulfide bond links cysteine 484 and cysteine 546. Positions 622–641 (QAQENRASGDAGSADGQSRS) are disordered. A compositionally biased stretch (low complexity) spans 627 to 641 (RASGDAGSADGQSRS). Residues 646-668 (VLFSTLVPLGLVLAVGAIAVWVA) traverse the membrane as a helical segment. Residues 669 to 771 (RVRHRKNVDR…AQVHDGPQEA (103 aa)) lie on the Cytoplasmic side of the membrane. Phosphoserine occurs at positions 680, 689, 696, and 742.

As to quaternary structure, interacts (mainly via CDR1-like domain) with dimeric IgA. Interacts (mainly via CDR2-like domain) with pentameric IgM. In terms of assembly, either free or part of the secretory IgA (sIgA) complex that consists of two, four or five IgA monomers, and two additional non-Ig polypeptides, namely the JCHAIN and the secretory component (the proteolytic product of PIGR). Free secretory component interacts with bacterial antigens toxA of C.difficile and eae of E.coli. In terms of processing, N-glycosylated. N-glycosylation is required for anchoring IgA molecules to mucus, but is not necessary for Ig binding.

It is found in the cell membrane. Its subcellular location is the secreted. Functionally, mediates selective transcytosis of polymeric IgA and IgM across mucosal epithelial cells. Binds polymeric IgA and IgM at the basolateral surface of epithelial cells. The complex is then transported across the cell to be secreted at the apical surface. During this process, a cleavage occurs that separates the extracellular (known as the secretory component) from the transmembrane segment. In terms of biological role, through its N-linked glycans ensures anchoring of secretory IgA (sIgA) molecules to mucus lining the epithelial surface to neutralize extracellular pathogens. On its own (free form) may act as a non-specific microbial scavenger to prevent pathogen interaction with epithelial cells. The chain is Polymeric immunoglobulin receptor (Pigr) from Mus musculus (Mouse).